Reading from the N-terminus, the 243-residue chain is uncharacterized protein (243 aa).

Residues Ile-55–Val-75 form a helical membrane-spanning segment.

The protein localises to the membrane. This is an uncharacterized protein from Rickettsia prowazekii (strain Madrid E).